Here is a 504-residue protein sequence, read N- to C-terminus: TGF-beta-activated kinase 1 and MAP3K7-binding protein 1 (504 aa).

The segment at 1–22 is disordered; that stretch reads MAAQRRSLLQSEQQPSWTDDLP. S7 carries the post-translational modification Phosphoserine. Polar residues predominate over residues 7-17; sequence SLLQSEQQPSW. Residues 28-365 enclose the PPM-type phosphatase domain; it reads GVGSASNRSY…EDMTLLVRNF (338 aa). S378 is modified (phosphoserine). S395 carries O-linked (GlcNAc) serine glycosylation. S423 bears the Phosphoserine; by MAPK14 mark. Positions 430–439 are enriched in polar residues; it reads ATPTLTNQSP. Residues 430-478 are disordered; sequence ATPTLTNQSPTLTLQSTNTHTQSSSSSSDGGLFRSRPAHSLPPGEDGRV. T431 carries the phosphothreonine; by MAPK14 modification. S438 carries the phosphoserine; by MAPK14 modification. Over residues 440-457 the composition is skewed to low complexity; sequence TLTLQSTNTHTQSSSSSS. A Phosphothreonine modification is found at T442.

Interacts with XIAP and BIRC7. Interacts with TRAF6 and MAP3K7; during IL-1 signaling. Identified in the TRIKA2 complex composed of MAP3K7, TAB1 and TAB2. Interacts with TRAF6 and MAPK14; these interactions allow MAPK14 autophosphorylation. Interacts with STING1; interaction takes place following cGAMP activation and promotes TAB1 recruitment to the endoplasmic reticulum, triggering MAP3K7/TAK1 activation and STING1 phosphorylation. In terms of processing, phosphorylated at all three sites Ser-423, Thr-431 and Ser-438 by MAPK14 when cells were exposed to cellular stresses, or stimulated with TNF-alpha, IL1 or LPS. These phosphorylations inhibit TAK1 activation by a feedback control mechanism. Dephosphorylated by DUSP14 at Ser-438, leading to TAB1-MAP3K7/TAK1 complex inactivation in T-cells. Ubiquitinated by MAP3K1 with 'Lys-63'-linked polyubiquitin; leading to activation of TAK1 and of JNK and p38 MAP kinases following EGF and TGF-beta stimulation. Ubiquitinated by ITCH with 'Lys-48'-linked polyubiquitin; leading to proteasomal degradation. Ubiquitinated by RNF114 during maternal-to-zygotic transition; leading to degradation. Post-translationally, (Microbial infection) Deubiquitinated by Y.enterocolitica YopP. In terms of processing, O-GlcNAcylated at Ser-395 by OGT is required for full MAP3K7/TAK1 activation upon stimulation with IL-1 or osmotic stress. Deglycosylated at Ser-395 by OGA. Ubiquitous.

Its subcellular location is the cytoplasm. It is found in the cytosol. The protein resides in the endoplasmic reticulum membrane. Functionally, key adapter protein that plays an essential role in JNK and NF-kappa-B activation and proinflammatory cytokines production in response to stimulation with TLRs and cytokines. Mechanistically, associates with the catalytic domain of MAP3K7/TAK1 to trigger MAP3K7/TAK1 autophosphorylation leading to its full activation. Similarly, associates with MAPK14 and triggers its autophosphorylation and subsequent activation. In turn, MAPK14 phosphorylates TAB1 and inhibits MAP3K7/TAK1 activation in a feedback control mechanism. Also plays a role in recruiting MAPK14 to the TAK1 complex for the phosphorylation of the TAB2 and TAB3 regulatory subunits. This is TGF-beta-activated kinase 1 and MAP3K7-binding protein 1 (TAB1) from Homo sapiens (Human).